Reading from the N-terminus, the 327-residue chain is Phenylalanine--tRNA ligase alpha subunit (327 aa).

E252 serves as a coordination point for Mg(2+).

The protein belongs to the class-II aminoacyl-tRNA synthetase family. Phe-tRNA synthetase alpha subunit type 1 subfamily. Tetramer of two alpha and two beta subunits. Mg(2+) serves as cofactor.

The protein localises to the cytoplasm. It carries out the reaction tRNA(Phe) + L-phenylalanine + ATP = L-phenylalanyl-tRNA(Phe) + AMP + diphosphate + H(+). This is Phenylalanine--tRNA ligase alpha subunit from Salmonella agona (strain SL483).